Reading from the N-terminus, the 289-residue chain is Phosphatidylglycerol--prolipoprotein diacylglyceryl transferase (289 aa).

Transmembrane regions (helical) follow at residues 21 to 41, 53 to 73, 95 to 115, and 122 to 142; these read IGPLSIRWYGLLIASAVLLGI, IDPNAIADLAVWLVIGAIPAA, IWHGGIAIHGAILGGTAALIL, and IPIWQLTDVVVPSLALGQAIG. An a 1,2-diacyl-sn-glycero-3-phospho-(1'-sn-glycerol)-binding site is contributed by R143. 3 helical membrane-spanning segments follow: residues 182 to 202, 215 to 235, and 247 to 267; these read PTFLYESLWNLLLCLLLIWLF, GVMTCIYLIGYSLGRIWIEGL, and IAQMVSIVAIAFGVLGLVWIY.

This sequence belongs to the Lgt family.

Its subcellular location is the cell inner membrane. The catalysed reaction is L-cysteinyl-[prolipoprotein] + a 1,2-diacyl-sn-glycero-3-phospho-(1'-sn-glycerol) = an S-1,2-diacyl-sn-glyceryl-L-cysteinyl-[prolipoprotein] + sn-glycerol 1-phosphate + H(+). It participates in protein modification; lipoprotein biosynthesis (diacylglyceryl transfer). Catalyzes the transfer of the diacylglyceryl group from phosphatidylglycerol to the sulfhydryl group of the N-terminal cysteine of a prolipoprotein, the first step in the formation of mature lipoproteins. The chain is Phosphatidylglycerol--prolipoprotein diacylglyceryl transferase from Synechococcus elongatus (strain ATCC 33912 / PCC 7942 / FACHB-805) (Anacystis nidulans R2).